The primary structure comprises 621 residues: (-)-beta-phellandrene synthase 1, chloroplastic (621 aa).

Residues 1–49 constitute a chloroplast transit peptide; sequence MALALVSVAPLVSMRRSLFSSPYELKSIDKTIPNLVMCRKRMSGTPSIR. Residues D372, D376, and D524 each contribute to the Mg(2+) site. A DDXXD motif motif is present at residues 372 to 376; sequence DDIYD.

The protein belongs to the terpene synthase family. Tpsd subfamily. The cofactor is Mg(2+). Mn(2+) serves as cofactor.

The protein localises to the plastid. It is found in the chloroplast. The enzyme catalyses (2E)-geranyl diphosphate = (-)-beta-phellandrene + diphosphate. Its pathway is terpene metabolism; oleoresin biosynthesis. It participates in secondary metabolite biosynthesis; terpenoid biosynthesis. Functionally, monoterpene synthase (TPS) involved in the biosynthesis of monoterpene natural products included in conifer oleoresin secretions and volatile emissions; these compounds contribute to biotic and abiotic stress defense against herbivores and pathogens. Catalyzes the conversion of (2E)-geranyl diphosphate (GPP) to (-)-beta-phellandrene and, to a lower extent, to (-)-alpha-phellandrene. This is (-)-beta-phellandrene synthase 1, chloroplastic from Pinus contorta (Shore pine).